We begin with the raw amino-acid sequence, 138 residues long: MLIPKRVKYRRQHRPHRSGVSKGGNRITFGDYGIQALEPAYITNRQIESARIAINRHVKRGGKVWINIFPDRPLTQKPLGVRMGSGKGPVEKWVANVKPGRILFEMSFPNEEVALEALRRAGQKLPCKVRIVKKEDQF.

Residues 1-19 are compositionally biased toward basic residues; the sequence is MLIPKRVKYRRQHRPHRSG. The interval 1-24 is disordered; sequence MLIPKRVKYRRQHRPHRSGVSKGG.

This sequence belongs to the universal ribosomal protein uL16 family. Part of the 50S ribosomal subunit.

Its function is as follows. Binds 23S rRNA and is also seen to make contacts with the A and possibly P site tRNAs. In Corynebacterium diphtheriae (strain ATCC 700971 / NCTC 13129 / Biotype gravis), this protein is Large ribosomal subunit protein uL16.